Here is a 212-residue protein sequence, read N- to C-terminus: MIPLVALLVLLTLQASPGDIVSVNVTDTATLTVGDSCMYFVDNLQPSINATPGEYEVKIGINCTPGLKEVYADGSVLAQIDVNETTIDYQAYAASLEKENLALQKEVESLKEKLKISQEQIETLKSQLEDLQNKAKMLGIQNELQKQQIEELQKKLERAKTELQKKKSDLDELEEKIRELNRQSSIYRLATFFMVSLFVGSFVALVFVARKE.

A signal peptide spans 1 to 18; it reads MIPLVALLVLLTLQASPG. A helical transmembrane segment spans residues 186–208; that stretch reads IYRLATFFMVSLFVGSFVALVFV.

This sequence to A.fulgidus AF_0540.

The protein localises to the membrane. This is an uncharacterized protein from Archaeoglobus fulgidus (strain ATCC 49558 / DSM 4304 / JCM 9628 / NBRC 100126 / VC-16).